The chain runs to 196 residues: ATP-dependent Clp protease proteolytic subunit (196 aa).

The Nucleophile role is filled by Ser-97. His-122 is a catalytic residue.

The protein belongs to the peptidase S14 family. As to quaternary structure, fourteen ClpP subunits assemble into 2 heptameric rings which stack back to back to give a disk-like structure with a central cavity, resembling the structure of eukaryotic proteasomes.

It is found in the cytoplasm. The enzyme catalyses Hydrolysis of proteins to small peptides in the presence of ATP and magnesium. alpha-casein is the usual test substrate. In the absence of ATP, only oligopeptides shorter than five residues are hydrolyzed (such as succinyl-Leu-Tyr-|-NHMec, and Leu-Tyr-Leu-|-Tyr-Trp, in which cleavage of the -Tyr-|-Leu- and -Tyr-|-Trp bonds also occurs).. In terms of biological role, cleaves peptides in various proteins in a process that requires ATP hydrolysis. Has a chymotrypsin-like activity. Plays a major role in the degradation of misfolded proteins. In Lacticaseibacillus paracasei (strain ATCC 334 / BCRC 17002 / CCUG 31169 / CIP 107868 / KCTC 3260 / NRRL B-441) (Lactobacillus paracasei), this protein is ATP-dependent Clp protease proteolytic subunit.